A 696-amino-acid chain; its full sequence is Iron-sulfur clusters transporter ATM1, mitochondrial (696 aa).

Residues M1–G67 constitute a mitochondrion transit peptide. At V68–R109 the chain is on the mitochondrial matrix side. A helical transmembrane segment spans residues V110–F131. The 291-residue stretch at V110–Q400 folds into the ABC transmembrane type-1 domain. Over K132–G154 the chain is Mitochondrial intermembrane. The helical transmembrane segment at T155–F178 threads the bilayer. Residues A179–V227 are Mitochondrial matrix-facing. A helical membrane pass occupies residues L228–Y251. A topological domain (mitochondrial intermembrane) is located at residue N252. A helical transmembrane segment spans residues Y253–I273. At K274 to A339 the chain is on the mitochondrial matrix side. Glutathione contacts are provided by residues R279–R283 and N342–Q345. Residues Y340–Y358 form a helical membrane-spanning segment. Over M359–D373 the chain is Mitochondrial intermembrane. The helical transmembrane segment at L374 to Y395 threads the bilayer. Position 392 (G392) interacts with glutathione. At R396–K696 the chain is on the mitochondrial matrix side. In terms of domain architecture, ABC transporter spans I438 to N674. ATP-binding positions include Y447 and G471–R482.

The protein belongs to the ABC transporter superfamily. ABCB family. Heavy Metal importer (TC 3.A.1.210) subfamily. In terms of assembly, homodimer.

It is found in the mitochondrion inner membrane. Performs an essential function in the generation of cytoplasmic iron-sulfur proteins by mediating the ATP-dependent export of Fe/S cluster precursors synthesized by NFS1 and other mitochondrial proteins. Hydrolyzes ATP. Binds glutathione and may function by transporting a glutathione-conjugated iron-sulfur compound. In Debaryomyces hansenii (strain ATCC 36239 / CBS 767 / BCRC 21394 / JCM 1990 / NBRC 0083 / IGC 2968) (Yeast), this protein is Iron-sulfur clusters transporter ATM1, mitochondrial.